Reading from the N-terminus, the 210-residue chain is Peptidyl-tRNA hydrolase (210 aa).

Tyrosine 14 serves as a coordination point for tRNA. Histidine 19 functions as the Proton acceptor in the catalytic mechanism. Positions 64, 66, and 112 each coordinate tRNA.

The protein belongs to the PTH family. Monomer.

It is found in the cytoplasm. It carries out the reaction an N-acyl-L-alpha-aminoacyl-tRNA + H2O = an N-acyl-L-amino acid + a tRNA + H(+). In terms of biological role, hydrolyzes ribosome-free peptidyl-tRNAs (with 1 or more amino acids incorporated), which drop off the ribosome during protein synthesis, or as a result of ribosome stalling. Functionally, catalyzes the release of premature peptidyl moieties from peptidyl-tRNA molecules trapped in stalled 50S ribosomal subunits, and thus maintains levels of free tRNAs and 50S ribosomes. The protein is Peptidyl-tRNA hydrolase of Methylorubrum extorquens (strain CM4 / NCIMB 13688) (Methylobacterium extorquens).